Consider the following 129-residue polypeptide: Small ribosomal subunit protein uS9 (129 aa).

Belongs to the universal ribosomal protein uS9 family.

In Gemmatimonas aurantiaca (strain DSM 14586 / JCM 11422 / NBRC 100505 / T-27), this protein is Small ribosomal subunit protein uS9.